Reading from the N-terminus, the 311-residue chain is Formimidoylglutamase (311 aa).

Positions 122, 151, 153, 155, 242, and 244 each coordinate Mn(2+).

It belongs to the arginase family. Mn(2+) serves as cofactor.

The enzyme catalyses N-formimidoyl-L-glutamate + H2O = formamide + L-glutamate. The protein operates within amino-acid degradation; L-histidine degradation into L-glutamate; L-glutamate from N-formimidoyl-L-glutamate (hydrolase route): step 1/1. Catalyzes the conversion of N-formimidoyl-L-glutamate to L-glutamate and formamide. The sequence is that of Formimidoylglutamase from Pseudomonas aeruginosa (strain UCBPP-PA14).